A 362-amino-acid polypeptide reads, in one-letter code: Microfibril-associated glycoprotein 3 (362 aa).

A signal peptide spans 1–18 (MKLHCCLFTLVASIIVPA). Topologically, residues 19–147 (AFVLEDVDFD…LRVIFTSGDM (129 aa)) are extracellular. Asn-36, Asn-41, and Asn-110 each carry an N-linked (GlcNAc...) asparagine glycan. The Ig-like C2-type domain occupies 45-137 (PSSFELSASS…SPIRASYSVT (93 aa)). Cys-73 and Cys-124 are disulfide-bonded. A helical membrane pass occupies residues 148–170 (SVYYMIVCLIAFTITLILNVTRL). The Cytoplasmic portion of the chain corresponds to 171 to 362 (CMMSSHLRKT…KDGAYENCQL (192 aa)). Disordered regions lie at residues 285 to 306 (VINP…GSLN) and 323 to 350 (ETKS…ESNC). Over residues 323–337 (ETKSIDTESQGSSHF) the composition is skewed to polar residues.

Post-translationally, glycosylated.

It localises to the cell membrane. In terms of biological role, component of the elastin-associated microfibrils. This Homo sapiens (Human) protein is Microfibril-associated glycoprotein 3 (MFAP3).